Consider the following 207-residue polypeptide: Large ribosomal subunit protein bL25 (207 aa).

The segment at 1-20 (MANHQIKAQRRKDEGKGASR) is disordered.

Belongs to the bacterial ribosomal protein bL25 family. CTC subfamily. As to quaternary structure, part of the 50S ribosomal subunit; part of the 5S rRNA/L5/L18/L25 subcomplex. Contacts the 5S rRNA. Binds to the 5S rRNA independently of L5 and L18.

In terms of biological role, this is one of the proteins that binds to the 5S RNA in the ribosome where it forms part of the central protuberance. The sequence is that of Large ribosomal subunit protein bL25 from Xylella fastidiosa (strain M12).